The primary structure comprises 157 residues: Subgroup A Rous sarcoma virus receptor pg950 (157 aa).

An N-terminal signal peptide occupies residues Met-1–Gly-19. Residues Asn-20 and Asn-24 are each glycosylated (N-linked (GlcNAc...) asparagine). At Asn-20–Arg-102 the chain is on the extracellular side. Positions Ser-28–Thr-71 constitute an LDL-receptor class A domain. 3 disulfide bridges follow: Cys-30/Cys-47, Cys-37/Cys-60, and Cys-54/Cys-69. N-linked (GlcNAc...) asparagine glycosylation occurs at Asn-81. Residues Met-103–Gly-125 form a helical membrane-spanning segment. At Lys-126–Ser-157 the chain is on the cytoplasmic side.

(Microbial infection) Interacts with Rous sarcoma virus envelope protein; this interaction allows the viral attachment.

It is found in the membrane. In terms of biological role, responsible for susceptibility to the retrovirus subgroup A Rous sarcoma virus. This chain is Subgroup A Rous sarcoma virus receptor pg950, found in Coturnix japonica (Japanese quail).